Here is a 239-residue protein sequence, read N- to C-terminus: tRNA (guanine-N(1)-)-methyltransferase (239 aa).

S-adenosyl-L-methionine-binding positions include G110 and 129-134 (LGDFVL).

The protein belongs to the RNA methyltransferase TrmD family. In terms of assembly, homodimer.

It is found in the cytoplasm. The catalysed reaction is guanosine(37) in tRNA + S-adenosyl-L-methionine = N(1)-methylguanosine(37) in tRNA + S-adenosyl-L-homocysteine + H(+). In terms of biological role, specifically methylates guanosine-37 in various tRNAs. The sequence is that of tRNA (guanine-N(1)-)-methyltransferase from Clostridium beijerinckii (strain ATCC 51743 / NCIMB 8052) (Clostridium acetobutylicum).